The following is an 810-amino-acid chain: Abnormal pharyngeal pumping eat-20 (810 aa).

The N-terminal stretch at 1–20 is a signal peptide; that stretch reads MTTFCRVLLIFGIYVAVCCA. Over 21-748 the chain is Extracellular; the sequence is QSVEDDVFHF…GKQSSAAASW (728 aa). 3 N-linked (GlcNAc...) asparagine glycosylation sites follow: N90, N171, and N232. EGF-like domains lie at 220-257, 258-293, and 301-335; these read PPSP…DRCE, LDVC…LLCE, and VAPI…ANCN. 9 cysteine pairs are disulfide-bonded: C224/C235, C229/C245, C247/C256, C261/C272, C266/C281, C283/C292, C305/C314, C309/C323, and C325/C334. N371 is a glycosylation site (N-linked (GlcNAc...) asparagine). The span at 522–531 shows a compositional bias: low complexity; that stretch reads FAPTTGTQQP. Disordered stretches follow at residues 522–567 and 684–738; these read FAPT…STMQ and PHPQ…HTSS. Positions 542 to 558 are enriched in acidic residues; the sequence is DENEEEEEEETTEETEE. A helical transmembrane segment spans residues 749 to 769; that stretch reads IIAIIALIVLGLLLLATSLFI. Over 770–810 the chain is Cytoplasmic; sequence LRYIRQSRKLHGKYNPAREEHNLSAAYAMPMSHIAKEERLI.

In terms of tissue distribution, highly expressed in the pharynx, circumpharyngeal cells, pharyngeal-intestinal valve and a subset of neurons in larval and embryonic stages. Also moderately expressed in the lining of the intestine, coelomocytes, labial process bundles and some hypodermal cells. In adults, it is predominantly expressed in the pharynx, the pharyngeal-intenstinal valve, some circumpharyngeal cells, m3, m4 and m6 pharyngeal muscles, and IL1, OLQ, BAG and ALN neurons. Weaker expression is observed in labial process bundles, coelomocytes, the ventral hypodermal ridge, the vulval hypodermis and the sensory rays of the adult male tail.

The protein localises to the membrane. Its function is as follows. Regulates pharyngeal pumping during feeding. This chain is Abnormal pharyngeal pumping eat-20 (eat-20), found in Caenorhabditis elegans.